A 137-amino-acid chain; its full sequence is Basic phospholipase A2 PeBP(R)-I/II (137 aa).

The N-terminal stretch at 1–16 (MRTLWIMAVLLLGVEG) is a signal peptide. Intrachain disulfides connect Cys42-Cys131, Cys44-Cys60, Cys59-Cys111, Cys65-Cys137, Cys66-Cys104, Cys73-Cys97, and Cys91-Cys102. The active site involves His63. Residue Asp105 is part of the active site.

This sequence belongs to the phospholipase A2 family. Group II subfamily. R49 sub-subfamily. In terms of tissue distribution, expressed by the venom gland.

Its subcellular location is the secreted. It catalyses the reaction a 1,2-diacyl-sn-glycero-3-phosphocholine + H2O = a 1-acyl-sn-glycero-3-phosphocholine + a fatty acid + H(+). Its function is as follows. Snake venom phospholipases A2 that have myotoxic, and edema-inducing activity, as well as extremely weak lipolytic activity. PLA2 catalyzes the calcium-dependent hydrolysis of the 2-acyl groups in 3-sn-phosphoglycerides. In Protobothrops elegans (Elegant pitviper), this protein is Basic phospholipase A2 PeBP(R)-I/II.